We begin with the raw amino-acid sequence, 648 residues long: Leucine-rich repeat transmembrane protein FLRT3 (648 aa).

A signal peptide spans 1 to 28 (MSTETWNLFVAWAQLLLLFRISPQYVNA). At 29–527 (KPCPSVCRCD…KEPYKNSSLP (499 aa)) the chain is on the extracellular side. The region spanning 30–62 (PCPSVCRCDGGFIYCNDRDLTSIPSGIPDDATT) is the LRRNT domain. 2 disulfides stabilise this stretch: Cys31-Cys37 and Cys35-Cys44. LRR repeat units follow at residues 58-82 (DDATTLYLQNNQINNAGIPSDLRGL), 83-105 (DKVERIYLYRNSLDEFPINLPKN), 107-126 (KELHLQENNIRTITYDALSQ), 127-152 (IPSIEELHLDDNSVSAVSIEDGAFRD), 154-179 (IFLRLLFLSRNHLSTIPWGLPRTIEE), 181-197 (RLDDNRISTIAEISLQD), 198-223 (LTNLKRLVLDGNLLNNNGLGERVFMN), 225-246 (INLTELSLVRNSLTSPPANLPG), 247-269 (TNLRKLYLQENHMNYVPPNAFAD), and 270-293 (LTQLYRLDMSNNNITALPQGIFDD). N-linked (GlcNAc...) asparagine glycosylation occurs at Asn226. The 52-residue stretch at 305-356 (NPWYCGCKMKWVRDWLQSLPSKVNVRGLMCQAPERVRGMTIKDLNKELFDCK) folds into the LRRCT domain. The cysteines at positions 309 and 334 are disulfide-linked. Residues 409–503 (KIITIQVKSI…VCIETETAPL (95 aa)) enclose the Fibronectin type-III domain. Residues 528–548 (LAAIIGGAVALVAITLLALVC) traverse the membrane as a helical segment. Residues 549–648 (WYVHRNGSLF…GIPDSDHSHS (100 aa)) are Cytoplasmic-facing. Low complexity predominate over residues 624–633 (NSHSESSSNR). Residues 624–648 (NSHSESSSNRSYRDSGIPDSDHSHS) are disordered.

Interacts with fgfr1 and fgfr4. Interacts with rnd1, cdh1 and pcdh8. Interacts (via extracellular domain) with unc5b and unc5d (via extracellular domain). N-glycosylated. In terms of processing, proteolytic cleavage in the juxtamembrane region gives rise to a soluble ectodomain. Cleavage is probably effected by a metalloprotease.

It is found in the cell membrane. The protein resides in the endoplasmic reticulum membrane. The protein localises to the cell junction. It localises to the focal adhesion. Its subcellular location is the secreted. It is found in the cell projection. The protein resides in the axon. The protein localises to the growth cone membrane. Functionally, functions in cell-cell adhesion, cell migration and axon guidance, exerting an attractive or repulsive role depending on its interaction partners. Modulates cadherin-dependent cell-cell adhesion and cell sorting. Plays a role in the spatial organization of brain neurons. Plays a role in vascular development. Plays a role in cell-cell adhesion via its interaction with latrophilins that are expressed at the surface of adjacent cells. Mediates axon attraction towards cells expressing ntn1. mediates axon growth cone collapse and plays a repulsive role in neuron guidance via its interaction with unc-5 family members. Plays a role in the regulation of the density of glutamaergic synapses. Plays a role in signaling cascades downstream of fgfr1, and possibly also other fgfr family members. Plays a role in embryonic morphogenesis, but not in embryonic patterning. The protein is Leucine-rich repeat transmembrane protein FLRT3 of Xenopus tropicalis (Western clawed frog).